Consider the following 96-residue polypeptide: MNIRPLHDRVIVKRLEVESKSAGGIVLTGSAAEKSTRGEILAVGNGRLLENGTVKPLDVKVGDVVIFNEGYGVKKEKIDGEEVLILSEADLMAVVG.

It belongs to the GroES chaperonin family. In terms of assembly, heptamer of 7 subunits arranged in a ring. Interacts with the chaperonin GroEL.

It is found in the cytoplasm. Its function is as follows. Together with the chaperonin GroEL, plays an essential role in assisting protein folding. The GroEL-GroES system forms a nano-cage that allows encapsulation of the non-native substrate proteins and provides a physical environment optimized to promote and accelerate protein folding. GroES binds to the apical surface of the GroEL ring, thereby capping the opening of the GroEL channel. The sequence is that of Co-chaperonin GroES from Shewanella denitrificans (strain OS217 / ATCC BAA-1090 / DSM 15013).